Consider the following 537-residue polypeptide: 2-succinyl-5-enolpyruvyl-6-hydroxy-3-cyclohexene-1-carboxylate synthase (537 aa).

It belongs to the TPP enzyme family. MenD subfamily. Homodimer. It depends on Mg(2+) as a cofactor. Requires Mn(2+) as cofactor. Thiamine diphosphate serves as cofactor.

It carries out the reaction isochorismate + 2-oxoglutarate + H(+) = 5-enolpyruvoyl-6-hydroxy-2-succinyl-cyclohex-3-ene-1-carboxylate + CO2. It functions in the pathway quinol/quinone metabolism; 1,4-dihydroxy-2-naphthoate biosynthesis; 1,4-dihydroxy-2-naphthoate from chorismate: step 2/7. The protein operates within quinol/quinone metabolism; menaquinone biosynthesis. Its function is as follows. Catalyzes the thiamine diphosphate-dependent decarboxylation of 2-oxoglutarate and the subsequent addition of the resulting succinic semialdehyde-thiamine pyrophosphate anion to isochorismate to yield 2-succinyl-5-enolpyruvyl-6-hydroxy-3-cyclohexene-1-carboxylate (SEPHCHC). The sequence is that of 2-succinyl-5-enolpyruvyl-6-hydroxy-3-cyclohexene-1-carboxylate synthase from Dechloromonas aromatica (strain RCB).